Here is a 483-residue protein sequence, read N- to C-terminus: BTB/POZ domain and ankyrin repeat-containing protein NBCL (483 aa).

The BTB domain occupies 25-109 (SDVTFSVEGR…LYSGQVSIVP (85 aa)). The segment at 115-129 (RPNCGERACWHTHCT) adopts a C2HC NPR-type zinc-finger fold. Residues C118, C123, H125, and C128 each coordinate Zn(2+). ANK repeat units follow at residues 254–283 (QKIRRMRRALDSSDVELVKLMVMGEGLNLD), 284–313 (EALALPYAVENCSREVVKALLELGAADVNY), 318–347 (SGKTPLHIAAEMVSPDMVAVLLDHHADPNV), and 351–385 (DGVTPLDILRTLTSDFLFKGAVPGLTHIEPNKLRL). The tract at residues 401 to 437 (EGNANANSSNNNNAPCSAATPIYPPMNEDHNSSSSNA) is disordered. Residues 403–419 (NANANSSNNNNAPCSAA) show a composition bias toward low complexity.

It belongs to the plant 'ANKYRIN-BTB/POZ' family. 'NOOT-BOP-COCH-like' (NBCL) subfamily. In terms of assembly, homodimer. Interacts with APP1 around the plasma membrane and in the nucleus; this interaction disturbs APP1-mediated regulation of the nuclear transcription factor Y subunit (NF-YA1). Mainly expressed in root nodules, to a lesser extent in shoot apical meristems (SAM) and root meristems (RM), and barely in leaves, non-nodulating roots and root apical meristems (RAM).

The protein localises to the nucleus. It localises to the cytoplasm. It is found in the cell membrane. It participates in protein modification; protein ubiquitination. In terms of biological role, may act as a substrate-specific adapter of an E3 ubiquitin-protein ligase complex (CUL3-RBX1-BTB) which mediates the ubiquitination and subsequent proteasomal degradation of target proteins. Transcriptional co-regulator involved in the promotion of leaf and floral meristem fate and determinacy. Required for the abscission of senescent organs, probably by regulating the cell wall disorganization in abscission zones (AZs, e.g. pulvini at the base of leaves). Involved in the coordination of the symbiotic nodule developmental program; promotes the formation of root nodules by interacting directly with APP1 to modulate the expression of the nuclear transcription factor Y subunit (NF-YA1), a key nodulin. Necessary for the robust maintenance of nodule identity throughout the nodule developmental program. The chain is BTB/POZ domain and ankyrin repeat-containing protein NBCL from Lotus japonicus (Lotus corniculatus var. japonicus).